Consider the following 263-residue polypeptide: Small ribosomal subunit protein eS4, X isoform (263 aa).

In terms of domain architecture, S4 RNA-binding spans 42 to 104 (LPLIIFLRNR…TGEHFRLVYD (63 aa)). A Glycyl lysine isopeptide (Lys-Gly) (interchain with G-Cter in SUMO2) cross-link involves residue lysine 230. Lysine 233 is modified (N6-acetyllysine).

This sequence belongs to the eukaryotic ribosomal protein eS4 family. Component of the small ribosomal subunit. Part of the small subunit (SSU) processome, composed of more than 70 proteins and the RNA chaperone small nucleolar RNA (snoRNA) U3. Identified in a IGF2BP1-dependent mRNP granule complex containing untranslated mRNAs.

Its subcellular location is the cytoplasm. It is found in the nucleus. The protein resides in the nucleolus. Its function is as follows. Component of the small ribosomal subunit. The ribosome is a large ribonucleoprotein complex responsible for the synthesis of proteins in the cell. Part of the small subunit (SSU) processome, first precursor of the small eukaryotic ribosomal subunit. During the assembly of the SSU processome in the nucleolus, many ribosome biogenesis factors, an RNA chaperone and ribosomal proteins associate with the nascent pre-rRNA and work in concert to generate RNA folding, modifications, rearrangements and cleavage as well as targeted degradation of pre-ribosomal RNA by the RNA exosome. This Monodelphis domestica (Gray short-tailed opossum) protein is Small ribosomal subunit protein eS4, X isoform (RPS4X).